Consider the following 447-residue polypeptide: Na(+)-translocating NADH-quinone reductase subunit A (447 aa).

This sequence belongs to the NqrA family. In terms of assembly, composed of six subunits; NqrA, NqrB, NqrC, NqrD, NqrE and NqrF.

The catalysed reaction is a ubiquinone + n Na(+)(in) + NADH + H(+) = a ubiquinol + n Na(+)(out) + NAD(+). NQR complex catalyzes the reduction of ubiquinone-1 to ubiquinol by two successive reactions, coupled with the transport of Na(+) ions from the cytoplasm to the periplasm. NqrA to NqrE are probably involved in the second step, the conversion of ubisemiquinone to ubiquinol. In Cellvibrio japonicus (strain Ueda107) (Pseudomonas fluorescens subsp. cellulosa), this protein is Na(+)-translocating NADH-quinone reductase subunit A.